The primary structure comprises 154 residues: RING finger protein 11 (154 aa).

Polar residues predominate over residues 1–12 (MGNCLKSPTSDD). Positions 1-53 (MGNCLKSPTSDDISLLHESQSDRASFGEGTEPDQEPPPPYQEQVPVPVYHPTP) are disordered. Gly2 is lipidated: N-myristoyl glycine. A lipid anchor (S-palmitoyl cysteine) is attached at Cys4. 2 positions are modified to phosphoserine: Ser14 and Ser25. The PPxY motif signature appears at 37–40 (PPPY). Positions 41-51 (QEQVPVPVYHP) are enriched in low complexity. The RING-type zinc-finger motif lies at 99-140 (CVICMMDFVYGDPIRFLPCMHIYHLDCIDDWLMRSFTCPSCM). Thr135 bears the Phosphothreonine; by PKB/AKT1 mark.

As to quaternary structure, interacts (when phosphorylated) with 14-3-3. Interacts with the E3 ubiquitin-ligases NEDD4, ITCH, SMURF2 and WWP1. Also interacts with the E2 ubiquitin-conjugating enzymes UBE2D1 and UBE2N, but neither with CDC34, nor with UBE2L3. Interacts with ZNF350, EPS15 and STAMBP. After TNF stimulation, interacts with TAX1BP1, TNFAIP3 and RIPK1; these interactions are transient and they are lost after 1 hour of stimulation with TNF. Interacts with GGA1. Ubiquitinated in the presence of ITCH, SMURF2 and UBE2D1, as well as WWP1. In terms of processing, phosphorylation by PKB/AKT1 may accelerate degradation by the proteasome. Post-translationally, acylation at both Gly-2 and Cys-4 is required for proper localization to the endosomes.

It localises to the early endosome. It is found in the recycling endosome. The protein resides in the cytoplasm. Its subcellular location is the nucleus. Its function is as follows. Essential component of a ubiquitin-editing protein complex, comprising also TNFAIP3, ITCH and TAX1BP1, that ensures the transient nature of inflammatory signaling pathways. Promotes the association of TNFAIP3 to RIPK1 after TNF stimulation. TNFAIP3 deubiquitinates 'Lys-63' polyubiquitin chains on RIPK1 and catalyzes the formation of 'Lys-48'-polyubiquitin chains. This leads to RIPK1 proteasomal degradation and consequently termination of the TNF- or LPS-mediated activation of NF-kappa-B. Recruits STAMBP to the E3 ubiquitin-ligase SMURF2 for ubiquitination, leading to its degradation by the 26S proteasome. This Bos taurus (Bovine) protein is RING finger protein 11 (RNF11).